The chain runs to 216 residues: L-fuculose phosphate aldolase (216 aa).

Residues 28–29, 43–44, and 71–72 each bind substrate; these read GN, TG, and SS. Glu73 (proton donor/acceptor) is an active-site residue. Zn(2+) contacts are provided by Glu73, His92, His94, and His155.

It belongs to the aldolase class II family. AraD/FucA subfamily. In terms of assembly, homotetramer. It depends on Zn(2+) as a cofactor.

The catalysed reaction is L-fuculose 1-phosphate = (S)-lactaldehyde + dihydroxyacetone phosphate. Its pathway is carbohydrate degradation; L-fucose degradation; L-lactaldehyde and glycerone phosphate from L-fucose: step 3/3. Its function is as follows. Involved in the degradation of L-fucose and D-arabinose. Catalyzes the reversible cleavage of L-fuculose 1-phosphate (Fuc1P) to yield dihydroxyacetone phosphate (DHAP) and L-lactaldehyde. The chain is L-fuculose phosphate aldolase from Haemophilus influenzae (strain ATCC 51907 / DSM 11121 / KW20 / Rd).